The chain runs to 233 residues: Adapter protein MecA (233 aa).

It belongs to the MecA family. Homodimer.

Functionally, enables the recognition and targeting of unfolded and aggregated proteins to the ClpC protease or to other proteins involved in proteolysis. This is Adapter protein MecA from Lactococcus lactis subsp. lactis (strain IL1403) (Streptococcus lactis).